A 268-amino-acid chain; its full sequence is Eukaryotic translation initiation factor 3 subunit G-2 (268 aa).

One can recognise an RRM domain in the interval Ser-187 to Pro-265.

It belongs to the eIF-3 subunit G family. In terms of assembly, component of the eukaryotic translation initiation factor 3 (eIF-3) complex. The eIF-3 complex interacts with pix.

Its subcellular location is the cytoplasm. In terms of biological role, RNA-binding component of the eukaryotic translation initiation factor 3 (eIF-3) complex, which is involved in protein synthesis of a specialized repertoire of mRNAs and, together with other initiation factors, stimulates binding of mRNA and methionyl-tRNAi to the 40S ribosome. The eIF-3 complex specifically targets and initiates translation of a subset of mRNAs involved in cell proliferation. This subunit can bind 18S rRNA. The polypeptide is Eukaryotic translation initiation factor 3 subunit G-2 (Drosophila willistoni (Fruit fly)).